Reading from the N-terminus, the 836-residue chain is Conserved oligomeric Golgi complex subunit 7 (836 aa).

Coiled-coil stretches lie at residues 29 to 49 and 107 to 127; these read QDSL…ASEE and LARV…LQDA. The tract at residues 246 to 265 is disordered; the sequence is KLANERSESQRLSSGDEFQS.

It belongs to the COG7 family. In terms of assembly, component of the conserved oligomeric Golgi complex which is composed of eight different subunits and is required for normal Golgi morphology and localization. Interacts with COG5 and COG6.

Its subcellular location is the golgi apparatus membrane. In terms of biological role, required for normal Golgi function. Necessary for embryo development and pigmentation, especially for the expansion of cells and organs, and for the formation of the organized shoot apical meristem (SAM). Probably involved in the generation of the extra-cellular matrix. This is Conserved oligomeric Golgi complex subunit 7 from Arabidopsis thaliana (Mouse-ear cress).